Here is a 30-residue protein sequence, read N- to C-terminus: QRACPRILKKCRRDSDCPGECICKENGYCG.

Glutamine 1 is subject to Pyrrolidone carboxylic acid. Cystine bridges form between cysteine 4/cysteine 21, cysteine 11/cysteine 23, and cysteine 17/cysteine 29.

The protein resides in the secreted. Functionally, inhibits trypsin; probably participates in a plant defense mechanism. The chain is Trypsin inhibitor 3 from Momordica cochinchinensis (Spiny bitter cucumber).